The following is a 127-amino-acid chain: Small ribosomal subunit protein uS13 (127 aa).

The tract at residues 92 to 127 (HRQGLPVRGQRTRTNARTRRGRRLTVAGKKKAPSKK) is disordered. Basic residues predominate over residues 101–127 (QRTRTNARTRRGRRLTVAGKKKAPSKK).

It belongs to the universal ribosomal protein uS13 family. Part of the 30S ribosomal subunit. Forms a loose heterodimer with protein S19. Forms two bridges to the 50S subunit in the 70S ribosome.

Functionally, located at the top of the head of the 30S subunit, it contacts several helices of the 16S rRNA. In the 70S ribosome it contacts the 23S rRNA (bridge B1a) and protein L5 of the 50S subunit (bridge B1b), connecting the 2 subunits; these bridges are implicated in subunit movement. Contacts the tRNAs in the A and P-sites. The protein is Small ribosomal subunit protein uS13 of Gloeothece citriformis (strain PCC 7424) (Cyanothece sp. (strain PCC 7424)).